The sequence spans 733 residues: MTDTLFDRRDIDALLGGRHPDPFACLGPHGEAGRTVVRALLPGALRVRAVTPGGDELGALACVDEAGCFAGTITHDGRYRLAIDWPDAQQVTDDAYAFGTLLDDAALARFAAGDPAAVLDCLGATPIRVDGVDGVRFAVWAPNAQRVSVVGNFNSWDGRRHPMRLRRPWGVWELFVPGIGPGEHYKYELCAADGSLLPHKADPCARATEAPPRTASVVADTAALDGFGWHDAGWIDARPDAGRRFRVPWSIYEVHAESWQRVPEEMDRSATWDELAERLIPYVKGMGFTHVEFMPISEYPFGGSWGYQPLAQFAPSARFGPVDGFARFVDRAHAAGIGVIVDWVPAHFPNDAHGLAQFDGSALYEHADPREGMHPDWNTCVFNLGRNEVSAFLIASALAWARRYHVDGIRVDAVASMLYRDYSRKEGEWVPNVYGGRENLESVAFLRTLNDALHGAAAPAGVVTIAEESTAWPGVTAPTGDGGLGFDFKWNMGWMHDTLAYLHEDPIHRRYHHDRMTFGLVYAFSERFVLPLSHDEVVHGKGSLAAKMPDDAWQRLATLRAYFGFMWAHPGKKLLFMGSEFAQWSEFAHDGTPHWDLLDAPAHRGVQRLVRDLNRAYASEPALHALDCDAAGFTWLIGDDRDNSVLAFARRDDSGRVVVAICNFTPVPRSGYRVGLPAPGQWRELMNTDAAVYGGSNAGNDGAVWAQDVPAHGQPWSATLRLPPLATLWLAPA.

Asp412 functions as the Nucleophile in the catalytic mechanism. The active-site Proton donor is the Glu467.

It belongs to the glycosyl hydrolase 13 family. GlgB subfamily. In terms of assembly, monomer.

It catalyses the reaction Transfers a segment of a (1-&gt;4)-alpha-D-glucan chain to a primary hydroxy group in a similar glucan chain.. It functions in the pathway glycan biosynthesis; glycogen biosynthesis. Catalyzes the formation of the alpha-1,6-glucosidic linkages in glycogen by scission of a 1,4-alpha-linked oligosaccharide from growing alpha-1,4-glucan chains and the subsequent attachment of the oligosaccharide to the alpha-1,6 position. The polypeptide is 1,4-alpha-glucan branching enzyme GlgB (Burkholderia vietnamiensis (strain G4 / LMG 22486) (Burkholderia cepacia (strain R1808))).